The chain runs to 602 residues: Elongation factor 4 (602 aa).

Residues 7–188 (ENIRNFSIIA…SIIRLVPPPK (182 aa)) enclose the tr-type G domain. GTP is bound by residues 19 to 24 (DHGKST) and 135 to 138 (NKID).

This sequence belongs to the TRAFAC class translation factor GTPase superfamily. Classic translation factor GTPase family. LepA subfamily.

The protein resides in the cell inner membrane. It carries out the reaction GTP + H2O = GDP + phosphate + H(+). Its function is as follows. Required for accurate and efficient protein synthesis under certain stress conditions. May act as a fidelity factor of the translation reaction, by catalyzing a one-codon backward translocation of tRNAs on improperly translocated ribosomes. Back-translocation proceeds from a post-translocation (POST) complex to a pre-translocation (PRE) complex, thus giving elongation factor G a second chance to translocate the tRNAs correctly. Binds to ribosomes in a GTP-dependent manner. In Chlamydia trachomatis serovar D (strain ATCC VR-885 / DSM 19411 / UW-3/Cx), this protein is Elongation factor 4.